Here is a 207-residue protein sequence, read N- to C-terminus: Probable GTP-binding protein EngB (207 aa).

Residues 25 to 202 (DVPEIAFVGR…ATLLWQWAHP (178 aa)) form the EngB-type G domain. GTP is bound by residues 33–40 (GRSNAGKS), 60–64 (GRTQH), 82–85 (DLPG), 152–155 (TKAD), and 181–183 (FSA). Residues S40 and T62 each coordinate Mg(2+).

This sequence belongs to the TRAFAC class TrmE-Era-EngA-EngB-Septin-like GTPase superfamily. EngB GTPase family. The cofactor is Mg(2+).

In terms of biological role, necessary for normal cell division and for the maintenance of normal septation. The sequence is that of Probable GTP-binding protein EngB from Albidiferax ferrireducens (strain ATCC BAA-621 / DSM 15236 / T118) (Rhodoferax ferrireducens).